The sequence spans 449 residues: AP-4 complex subunit mu-1 (449 aa).

Residues 184 to 448 form the MHD domain; it reads KNEVFLDVVE…LSHSNAYVIR (265 aa).

Belongs to the adaptor complexes medium subunit family. Adaptor protein complex 4 (AP-4) is a heterotetramer composed of two large adaptins (epsilon-type subunit AP4E1 and beta-type subunit AP4B1), a medium adaptin (mu-type subunit AP4M1) and a small adaptin (sigma-type AP4S1). Interacts with tyrosine-based sorting signals on the cytoplasmic tail of cargo proteins such as APP, ATG9A, LAMP2 and NAGPA. Interacts with the C-terminal domain of GRID2. Interacts with GRIA1 and GRIA2; the interaction is indirect via CACNG3. Interacts with CACNG3; CACNG3 associates GRIA1 and GRIA2 with the adaptor protein complex 4 (AP-4) to target them to the somatodendritic compartment of neurons. Interacts with HOOK1 and HOOK2; the interactions are direct, mediate the interaction between FTS-Hook-FHIP (FHF) complex and AP-4 and the perinuclear distribution of AP-4.

It localises to the golgi apparatus. Its subcellular location is the trans-Golgi network membrane. It is found in the early endosome. Functionally, component of the adaptor protein complex 4 (AP-4). Adaptor protein complexes are vesicle coat components involved both in vesicle formation and cargo selection. They control the vesicular transport of proteins in different trafficking pathways. AP-4 forms a non clathrin-associated coat on vesicles departing the trans-Golgi network (TGN) and may be involved in the targeting of proteins from the trans-Golgi network (TGN) to the endosomal-lysosomal system. It is also involved in protein sorting to the basolateral membrane in epithelial cells and the proper asymmetric localization of somatodendritic proteins in neurons. Within AP-4, the mu-type subunit AP4M1 is directly involved in the recognition and binding of tyrosine-based sorting signals found in the cytoplasmic part of cargos. The adaptor protein complex 4 (AP-4) may also recognize other types of sorting signal. The chain is AP-4 complex subunit mu-1 from Mus musculus (Mouse).